Here is a 93-residue protein sequence, read N- to C-terminus: Stromal cell-derived factor 1 (93 aa).

The N-terminal stretch at 1–21 is a signal peptide; sequence MDIRTLALFSILLGSLCLSEG. The Receptor activation motif signature appears at 22–23; the sequence is KP. The segment at 29 to 33 is receptor and heparin binding; the sequence is RCPCR. Disulfide bonds link Cys-30–Cys-55 and Cys-32–Cys-71. Residues 41 to 51, Arg-62, Gln-69, and Lys-85 each bind heparin; that span reads KSNIKHLKILS. 2 receptor binding regions span residues 48–50 and 60–64; these read KIL and VARLK.

Belongs to the intercrine alpha (chemokine CxC) family. Monomer or homodimer; in equilibrium. Dimer formation is induced by non acidic pH and the presence of multivalent anions, and by binding to cxcr4 or heparin.

It is found in the secreted. Functionally, chemoattractant. Activates the C-X-C chemokine receptor cxcr4 to induce a rapid and transient rise in the level of intracellular calcium ions, and chemotaxis. Signaling with cxcr4 mediates the directional movement of mesodermal cells during gastrulation. Binds to the allosteric site (site 2) of integrins and activates them in a cxcr4-independent manner. The chain is Stromal cell-derived factor 1 from Xenopus tropicalis (Western clawed frog).